The chain runs to 513 residues: Bifunctional purine biosynthesis protein PurH (513 aa).

In terms of domain architecture, MGS-like spans 1–147 (MIQIKRALVS…KNHKNVVVLT (147 aa)).

This sequence belongs to the PurH family.

The catalysed reaction is (6R)-10-formyltetrahydrofolate + 5-amino-1-(5-phospho-beta-D-ribosyl)imidazole-4-carboxamide = 5-formamido-1-(5-phospho-D-ribosyl)imidazole-4-carboxamide + (6S)-5,6,7,8-tetrahydrofolate. It carries out the reaction IMP + H2O = 5-formamido-1-(5-phospho-D-ribosyl)imidazole-4-carboxamide. It functions in the pathway purine metabolism; IMP biosynthesis via de novo pathway; 5-formamido-1-(5-phospho-D-ribosyl)imidazole-4-carboxamide from 5-amino-1-(5-phospho-D-ribosyl)imidazole-4-carboxamide (10-formyl THF route): step 1/1. Its pathway is purine metabolism; IMP biosynthesis via de novo pathway; IMP from 5-formamido-1-(5-phospho-D-ribosyl)imidazole-4-carboxamide: step 1/1. This is Bifunctional purine biosynthesis protein PurH from Leptospira biflexa serovar Patoc (strain Patoc 1 / Ames).